We begin with the raw amino-acid sequence, 145 residues long: Hemoglobin fetal subunit beta (145 aa).

The Globin domain occupies 1–145 (MLSAEEKASV…VANALAHRYH (145 aa)). His-62 and His-91 together coordinate heme b.

The protein belongs to the globin family. Heterotetramer of two alpha chains and two beta chains. Red blood cells.

Involved in oxygen transport from the lung to the various peripheral tissues. This Capra hircus (Goat) protein is Hemoglobin fetal subunit beta.